A 581-amino-acid polypeptide reads, in one-letter code: Proline--tRNA ligase (581 aa).

This sequence belongs to the class-II aminoacyl-tRNA synthetase family. ProS type 1 subfamily. Homodimer.

The protein resides in the cytoplasm. The catalysed reaction is tRNA(Pro) + L-proline + ATP = L-prolyl-tRNA(Pro) + AMP + diphosphate. In terms of biological role, catalyzes the attachment of proline to tRNA(Pro) in a two-step reaction: proline is first activated by ATP to form Pro-AMP and then transferred to the acceptor end of tRNA(Pro). As ProRS can inadvertently accommodate and process non-cognate amino acids such as alanine and cysteine, to avoid such errors it has two additional distinct editing activities against alanine. One activity is designated as 'pretransfer' editing and involves the tRNA(Pro)-independent hydrolysis of activated Ala-AMP. The other activity is designated 'posttransfer' editing and involves deacylation of mischarged Ala-tRNA(Pro). The misacylated Cys-tRNA(Pro) is not edited by ProRS. The polypeptide is Proline--tRNA ligase (Chlamydia trachomatis serovar A (strain ATCC VR-571B / DSM 19440 / HAR-13)).